The chain runs to 744 residues: Prestin (744 aa).

The Cytoplasmic segment spans residues 1–75 (MDHAEENEIL…PITKWLPAYK (75 aa)). Residues 76 to 105 (FKEYVLGDLVSGISTGVLQLPQGLAFAMLA) form a helical membrane-spanning segment. Residues 106 to 108 (AVP) are Extracellular-facing. Residues 109-126 (PIFGLYSSFYPVIMYCFL) form a helical membrane-spanning segment. Residues 127 to 137 (GTSRHISIGPF) are Cytoplasmic-facing. The chain crosses the membrane as a helical span at residues 138-151 (AVISLMIGGVAVRL). At 152 to 168 (VPDDIVIPGGVNATNGT) the chain is on the extracellular side. The short motif at 158 to 168 (IPGGVNATNGT) is the Involved in motor function element. Residues Asn163 and Asn166 are each glycosylated (N-linked (GlcNAc...) asparagine). The helical transmembrane segment at 169–196 (EARDALRVKVAMSVTLLSGIIQFCLGVC) threads the bilayer. The Cytoplasmic portion of the chain corresponds to 197–206 (RFGFVAIYLT). Residues 207–230 (EPLVRGFTTAAAVHVFTSMLKYLF) form a helical membrane-spanning segment. The Extracellular segment spans residues 231 to 241 (GVKTKRYSGIF). An intramembrane region (helical) is located at residues 242 to 253 (SVVYSTVAVLQN). Residues 254–258 (VKNLN) are Extracellular-facing. The chain crosses the membrane as a helical span at residues 259 to 282 (VCSLGVGLMVFGLLLGGKEFNERF). Residues 283–291 (KEKLPAPIP) lie on the Cytoplasmic side of the membrane. Residues 292–307 (LEFFAVVMGTGISAGF) form a helical membrane-spanning segment. Topologically, residues 308–332 (NLKESYNVDVVGTLPLGLLPPANPD) are extracellular. The chain crosses the membrane as a helical span at residues 333 to 367 (TSLFHLVYVDAIAIAIVGFSVTISMAKTLANKHGY). Topologically, residues 368-370 (QVD) are cytoplasmic. A helical membrane pass occupies residues 371–388 (GNQELIALGLCNSIGSLF). Topologically, residues 389 to 396 (QTFSISCS) are extracellular. A helical transmembrane segment spans residues 397–406 (LSRSLVQEGT). Salicylate is bound at residue Ser398. Over 407–410 (GGKT) the chain is Cytoplasmic. Residues 411–432 (QLAGCLASLMILLVILATGFLF) form a helical membrane-spanning segment. The Extracellular segment spans residues 433–436 (ESLP). Residues 437 to 464 (QAVLSAIVIVNLKGMFMQFSDLPFFWRT) form a helical membrane-spanning segment. Residue Ser465 is a topological domain, cytoplasmic. Residues 466 to 481 (KIELTIWLTTFVSSLF) traverse the membrane as a helical segment. At 482–483 (LG) the chain is on the extracellular side. A helical membrane pass occupies residues 484–504 (LDYGLITAVIIALLTVIYRTQ). The segment at 505–718 (SPSYKVLGKL…AVLGSQLREA (214 aa)) is extended region for STAS domain. At 505-744 (SPSYKVLGKL…PNATPATPEA (240 aa)) the chain is on the cytoplasmic side. Residues 525 to 713 (AYEEVKEIPG…HSIHDAVLGS (189 aa)) enclose the STAS domain. Residues 718–744 (ALAEQEASAPPSQEDLEPNATPATPEA) are disordered.

Belongs to the SLC26A/SulP transporter (TC 2.A.53) family. As to quaternary structure, homodimer. Interacts (via STAS domain) with CALM; this interaction is calcium-dependent and the STAS domain interacts with only one lobe of CALM which is an elongated conformation. Interacts with MYH1.

Its subcellular location is the lateral cell membrane. It catalyses the reaction 2 hydrogencarbonate(in) + chloride(out) = 2 hydrogencarbonate(out) + chloride(in). Voltage-sensitive motor protein that drives outer hair cell (OHC) electromotility (eM) and participates in sound amplification in the hearing organ. Converts changes in the transmembrane electric potential into mechanical displacements resulting in the coupling of its expansion to movement of a charged voltage sensor across the lipid membrane. The nature of the voltage sensor is not completely clear, and two models compete. In the first model, acts as an incomplete transporter where intracellular chloride anion acts as extrinsic voltage sensor that drives conformational change in the protein which is sufficient to produce a length change in the plane of the membrane and hence in the length of the OHC. The second model in which multiple charged amino acid residues are distributed at the intracellular and extracellular membrane interfaces that form an intrinsic voltage sensor, whose movement produces the non-linear capacitance (NLC). However, the effective voltage sensor may be the result of a hybrid voltage sensor, assembled from intrinsic charge (charged residues) and extrinsic charge (bound anion). Notably, binding of anions to the anion-binding pocket partially neutralizes the intrinsic positive charge rather than to form an electrically negative sensor, therefore remaining charge may serve as voltage sensor that, after depolarization, moves from down (expanded state) to up (contracted) conformation, which is accompanied by an eccentric contraction of the intermembrane cross-sectional area of the protein as well as a major increase in the hydrophobic thickness of the protein having as consequences the plasma membrane thickening and the cell contraction after membrane depolarization. The anion-binding pocket transits from the inward-open (Down) state, where it is exposed toward the intracellular solvent in the absence of anion, to the occluded (Up) state upon anion binding. Salicylate competes for the anion-binding site and inhibits the voltage-sensor movement, and therefore inhibits the charge transfer and electromotility by displacing Cl(-) from the anion-binding site and by preventing the structural transitions to the contracted state. In addition, can act as a weak Cl(-)/HCO3(-) antiporter across the cell membrane and so regulate the intracellular pH of the outer hair cells (OHCs), while firstly found as being unable to mediate electrogenic anion transport. Moreover, supports a role in cardiac mechanical amplification serving as an elastic element to enhance the actomyosin- based sarcomere contraction system. This is Prestin from Homo sapiens (Human).